Here is a 217-residue protein sequence, read N- to C-terminus: MEHSAWHELIKAQLPEHYFGKINQFLDHVYAGGTIYPPREKVFAAIQTTDLEEVKVVILGQDPYHGPGQAQGLSFSVPNSVPAPPSLQNILKELTDDIGVKQDHDLTAWAEQGVLLLNACLTVPAGQANGHAGQIWEPFTDAVIKVVNSLDQPVVYILWGAYARKKKALITNPKHLVIESAHPSPLSAYRGFFGSKPFSQANAYLTSQGRTGIDWLR.

Asp-62 serves as the catalytic Proton acceptor.

Belongs to the uracil-DNA glycosylase (UDG) superfamily. UNG family.

The protein resides in the cytoplasm. It catalyses the reaction Hydrolyzes single-stranded DNA or mismatched double-stranded DNA and polynucleotides, releasing free uracil.. In terms of biological role, excises uracil residues from the DNA which can arise as a result of misincorporation of dUMP residues by DNA polymerase or due to deamination of cytosine. In Streptococcus suis (strain 98HAH33), this protein is Uracil-DNA glycosylase.